The sequence spans 592 residues: MNNGRIVRINGPLVVADNMKNAQMYEVVEVGEPRLIGEITRIEGDRAFIQVYEDTSGIKPNEPVYRTGAPLSIELGPGLIGKIFDGLQRPLDSIKELTKSPFIARGIKVPSVDRKTKWHFIPKVKKGDKIEGGDIIGIVNETPLVEHRILVPPYVHGTLKEIVAEGDYTVEDPIAVVDMNGDEAPIRLMQRWPVRIPRPFREKLEPTEPLLTGTRVLDTIFPIAKGGTAAIPGPFGSGKTVTLQSLAKWSAAKIVIYVGCGERGNEMTDELRQFPSLKDPWTGRPLLERTILVANTSNMPVAAREASIYVGITMAEYFRDQGYDTLLVADSTSRWAEALRDLGGRMEEMPAEEGFPSYLPSRLAEYYERAGRVKTVGKPERFGSVTVASAVSPPGGDFTEPVTSQTLRFVKVFWPLDVSLAQARHYPAINWLQGFSAYVDLVANWWNTNVDPKWREMRDMMVRTLIREDELRQIVRLVGPESLAEKDKLVLETARLIKEAFLKQNAYDDIDAFSSPQKQARVMRLIYLFNTHASRLVERGIPTKKIVDSMGQLLPEIIRSKAAIKNDELNKYDELERKLINVFENLEKEAGT.

Gly233–Thr240 lines the ATP pocket.

Belongs to the ATPase alpha/beta chains family. Has multiple subunits with at least A(3), B(3), C, D, E, F, H, I and proteolipid K(x).

Its subcellular location is the cell membrane. The enzyme catalyses ATP + H2O + 4 H(+)(in) = ADP + phosphate + 5 H(+)(out). Its function is as follows. Component of the A-type ATP synthase that produces ATP from ADP in the presence of a proton gradient across the membrane. The A chain is the catalytic subunit. This Saccharolobus islandicus (strain Y.G.57.14 / Yellowstone #1) (Sulfolobus islandicus) protein is A-type ATP synthase subunit A.